The sequence spans 184 residues: Ribosome-recycling factor (184 aa).

This sequence belongs to the RRF family.

It is found in the cytoplasm. Functionally, responsible for the release of ribosomes from messenger RNA at the termination of protein biosynthesis. May increase the efficiency of translation by recycling ribosomes from one round of translation to another. The polypeptide is Ribosome-recycling factor (Clostridium botulinum (strain ATCC 19397 / Type A)).